Consider the following 213-residue polypeptide: Endoplasmic reticulum vesicle protein 25 (213 aa).

The signal sequence occupies residues 1–20; the sequence is MILRIPSLLYLFTLLTAVYA. Over 21–181 the chain is Lumenal; it reads VKFDLTSDRN…TNESTNQRVK (161 aa). Residues 33-122 form the GOLD domain; the sequence is PKCIWNFASA…VRSVELDVDI (90 aa). Residues 182-202 form a helical membrane-spanning segment; it reads VFSVLIICCTIGLGVWQLLHL. The Cytoplasmic portion of the chain corresponds to 203–213; sequence RSFFKRKYLID.

Belongs to the EMP24/GP25L family.

Its subcellular location is the endoplasmic reticulum membrane. It localises to the golgi apparatus membrane. Its function is as follows. Constituent of COPII-coated endoplasmic reticulum-derived transport vesicles. Required for efficient transport of a subset of secretory proteins to the Golgi. Facilitates retrograde transport from the Golgi to the endoplasmic reticulum. In Cryptococcus neoformans var. neoformans serotype D (strain JEC21 / ATCC MYA-565) (Filobasidiella neoformans), this protein is Endoplasmic reticulum vesicle protein 25 (ERV25).